The chain runs to 156 residues: MMDYLITQNGGMVFAVLAMATATIFSGIGSAKGVGMTGEAAAALTTSQPEKFGQALILQLLPGTQGLYGFVIAFLIFINLGSDMSVVQGLNFLGASLPIAFTGLFSGIAQGKVAAAGIQILAKKPEHATKGIIFAAMVETYAILGFVISFLLVLNA.

The next 4 membrane-spanning stretches (helical) occupy residues 11 to 31 (GMVFAVLAMATATIFSGIGSA), 60 to 80 (LLPGTQGLYGFVIAFLIFINL), 89 to 109 (GLNFLGASLPIAFTGLFSGIA), and 132 to 152 (IIFAAMVETYAILGFVISFLL).

It belongs to the V-ATPase proteolipid subunit family. The N-terminus is blocked.

It is found in the cell membrane. Its function is as follows. Involved in ATP-driven sodium extrusion. The protein is V-type sodium ATPase subunit K (ntpK) of Enterococcus hirae (strain ATCC 9790 / DSM 20160 / JCM 8729 / LMG 6399 / NBRC 3181 / NCIMB 6459 / NCDO 1258 / NCTC 12367 / WDCM 00089 / R).